The primary structure comprises 363 residues: MTSLQCPPPDRTRRSLSPTGPKFRESCKSCAASKIRCTKEKPQCARCVKRNMVCEYLESKRARRKPGARLKHRESITTNAHHSPTTTTITTSRTTSSSPSASPKTYHPLNYVDILSWTPTPTLPDSATDTQTGLHCNFDDFLAFSHSTSLLGVPEAGELPVHLTTDFRQLEELNRAPEALDEILQCRCSEDGYQLAILSVVILKVLGWYATIIRPLLGVEAHSPGVGEGTTVRTDSLAETQLSSSFYVDSGQQISPKITMGPPLAYGRESEGKTRMAAQLILSQLHRVQRLVNILCHRFKLHSNREQNPAWNSSTASTATEPEGPAYIEHLYPFSSLVFDQIEKDVRGRLRSLSTELLEMLRY.

Positions 1–24 are disordered; it reads MTSLQCPPPDRTRRSLSPTGPKFR. The zn(2)-C6 fungal-type DNA-binding region spans 27–54; that stretch reads CKSCAASKIRCTKEKPQCARCVKRNMVC. Residues 63–72 are compositionally biased toward basic residues; the sequence is RRKPGARLKH. The disordered stretch occupies residues 63 to 104; it reads RRKPGARLKHRESITTNAHHSPTTTTITTSRTTSSSPSASPK. Over residues 76–102 the composition is skewed to low complexity; that stretch reads ITTNAHHSPTTTTITTSRTTSSSPSAS.

The protein resides in the nucleus. Transcriptional regulator; part of the gene cluster that mediates the biosynthesis of the tetrahydroxanthone dimer secalonic acid D. The chain is Transcriptional regulator AacuR from Aspergillus aculeatus (strain ATCC 16872 / CBS 172.66 / WB 5094).